The following is a 308-amino-acid chain: 2-dehydro-3-deoxy-phosphogluconate/2-dehydro-3-deoxy-6-phosphogalactonate aldolase (308 aa).

Substrate is bound by residues 57–58 (TT), 144–146 (YNY), and 169–171 (KDT). Lysine 169 functions as the Schiff-base intermediate with substrate in the catalytic mechanism.

The protein belongs to the DapA family. KDPG aldolase subfamily. As to quaternary structure, homotetramer; dimer of dimers.

The enzyme catalyses 2-dehydro-3-deoxy-6-phospho-D-gluconate = D-glyceraldehyde 3-phosphate + pyruvate. The catalysed reaction is 2-dehydro-3-deoxy-6-phospho-D-galactonate = D-glyceraldehyde 3-phosphate + pyruvate. Its pathway is carbohydrate acid metabolism; 2-dehydro-3-deoxy-D-gluconate degradation; D-glyceraldehyde 3-phosphate and pyruvate from 2-dehydro-3-deoxy-D-gluconate: step 2/2. Its function is as follows. Involved in the degradation of glucose and galactose via the Entner-Doudoroff pathway. Catalyzes the reversible cleavage of 2-keto-3-deoxy-6-phosphogluconate (KDPG) and 2-keto-3-deoxygluconate (KDG) forming pyruvate and glyceraldehyde 3-phosphate or glyceraldehyde, respectively. It is also able to catalyze the reversible cleavage of 2-keto-3-deoxy-6-phosphogalactonate (KDPGal) and 2-keto-3-deoxygalactonate (KDGal). In Saccharolobus solfataricus (strain ATCC 35092 / DSM 1617 / JCM 11322 / P2) (Sulfolobus solfataricus), this protein is 2-dehydro-3-deoxy-phosphogluconate/2-dehydro-3-deoxy-6-phosphogalactonate aldolase (eda).